A 571-amino-acid chain; its full sequence is Glutamate--tRNA ligase (571 aa).

A compositionally biased stretch (basic and acidic residues) spans 75–88; the sequence is GGPREDVARDKEGL. Residues 75 to 98 form a disordered region; it reads GGPREDVARDKEGLKPLPGAEPGN. The 'HIGH' region motif lies at 105–115; the sequence is PNPSGPLHIGH.

It belongs to the class-I aminoacyl-tRNA synthetase family. Glutamate--tRNA ligase type 2 subfamily.

The protein resides in the cytoplasm. The enzyme catalyses tRNA(Glu) + L-glutamate + ATP = L-glutamyl-tRNA(Glu) + AMP + diphosphate. Catalyzes the attachment of glutamate to tRNA(Glu) in a two-step reaction: glutamate is first activated by ATP to form Glu-AMP and then transferred to the acceptor end of tRNA(Glu). The chain is Glutamate--tRNA ligase from Methanopyrus kandleri (strain AV19 / DSM 6324 / JCM 9639 / NBRC 100938).